A 136-amino-acid chain; its full sequence is Globin-2 (136 aa).

One can recognise a Globin domain in the interval 1–134 (VSQADIAAVQ…ILSQMKIALS (134 aa)). H89 contributes to the heme b binding site.

This sequence belongs to the globin family. Homodimer.

The sequence is that of Globin-2 from Phreagena soyoae (Deep-sea cold-seep clam).